The sequence spans 428 residues: Enolase 2 (428 aa).

Residue glutamine 162 participates in (2R)-2-phosphoglycerate binding. Glutamate 204 acts as the Proton donor in catalysis. Mg(2+) contacts are provided by aspartate 241, glutamate 285, and aspartate 312. (2R)-2-phosphoglycerate contacts are provided by lysine 337, arginine 366, serine 367, and lysine 388. Lysine 337 (proton acceptor) is an active-site residue.

Belongs to the enolase family. Requires Mg(2+) as cofactor.

The protein resides in the cytoplasm. It is found in the secreted. Its subcellular location is the cell surface. It carries out the reaction (2R)-2-phosphoglycerate = phosphoenolpyruvate + H2O. Its pathway is carbohydrate degradation; glycolysis; pyruvate from D-glyceraldehyde 3-phosphate: step 4/5. Functionally, catalyzes the reversible conversion of 2-phosphoglycerate (2-PG) into phosphoenolpyruvate (PEP). It is essential for the degradation of carbohydrates via glycolysis. In Lactobacillus johnsonii (strain CNCM I-12250 / La1 / NCC 533), this protein is Enolase 2.